Here is a 202-residue protein sequence, read N- to C-terminus: IMP cyclohydrolase (202 aa).

It belongs to the archaeal IMP cyclohydrolase family.

It catalyses the reaction IMP + H2O = 5-formamido-1-(5-phospho-D-ribosyl)imidazole-4-carboxamide. It participates in purine metabolism; IMP biosynthesis via de novo pathway; IMP from 5-formamido-1-(5-phospho-D-ribosyl)imidazole-4-carboxamide: step 1/1. Its function is as follows. Catalyzes the cyclization of 5-formylamidoimidazole-4-carboxamide ribonucleotide to IMP. The polypeptide is IMP cyclohydrolase (Methanothermobacter thermautotrophicus (strain ATCC 29096 / DSM 1053 / JCM 10044 / NBRC 100330 / Delta H) (Methanobacterium thermoautotrophicum)).